Reading from the N-terminus, the 156-residue chain is Probable cyclic pyranopterin monophosphate synthase (156 aa).

Residues 73 to 75 (MCH) and 109 to 110 (ME) each bind substrate. The active site involves Asp-124.

The protein belongs to the MoaC family. As to quaternary structure, homohexamer; trimer of dimers.

The enzyme catalyses (8S)-3',8-cyclo-7,8-dihydroguanosine 5'-triphosphate = cyclic pyranopterin phosphate + diphosphate. It functions in the pathway cofactor biosynthesis; molybdopterin biosynthesis. Its function is as follows. Catalyzes the conversion of (8S)-3',8-cyclo-7,8-dihydroguanosine 5'-triphosphate to cyclic pyranopterin monophosphate (cPMP). The chain is Probable cyclic pyranopterin monophosphate synthase from Archaeoglobus fulgidus (strain ATCC 49558 / DSM 4304 / JCM 9628 / NBRC 100126 / VC-16).